The primary structure comprises 228 residues: Hematopoietically-expressed homeobox protein hhex (228 aa).

Positions Arg117 to Lys176 form a DNA-binding region, homeobox. Positions Leu175–Leu228 are disordered. Residues Gly184–Glu207 show a composition bias toward basic and acidic residues. A compositionally biased stretch (acidic residues) spans Asp213–Asp222.

Expressed in embryonic endothelial and blood lineages. From late-blastula stage, expression is restricted to the dorsal marginal region of the extraembryonic yolk syncytial layer (YSL). By the onset of gastrulation, expressed in the entire dorsal half of the YSL. Post-gastrulation, expression appears in both anterior and posterior lateral plate mesoderm by the 3-somite stage. Posteriorly, expression is in the intermediate cell mass (ICM), which contains both endothelial and blood precursors. Subsequently expressed in the developing endothelial cells including the endocardium until the onset of circulation (24 hpf) and disappears completely by 30 hpf, at which point expression is seen in the thyroid and liver primordia. Also expressed in the developing biliary tree and pancreas.

The protein resides in the nucleus. Its function is as follows. Recognizes the DNA sequence 5'-ATTAA-3'. Transcriptional repressor. Regulates the differentiation of both endothelial and blood cells. Plays a role in embryonic dorsoventral patterning by regulating bmp expression. May establish anterior identity. Functions in the embryo to regulate liver development. Functions extraembryonically to generate organ chirality. This is Hematopoietically-expressed homeobox protein hhex from Danio rerio (Zebrafish).